The chain runs to 271 residues: Methylthioribulose-1-phosphate dehydratase (271 aa).

Cysteine 123 serves as a coordination point for substrate. Positions 141 and 143 each coordinate Zn(2+). The active-site Proton donor/acceptor is the glutamate 166. Histidine 231 provides a ligand contact to Zn(2+).

The protein belongs to the aldolase class II family. MtnB subfamily. Zn(2+) serves as cofactor.

The protein resides in the cytoplasm. The catalysed reaction is 5-(methylsulfanyl)-D-ribulose 1-phosphate = 5-methylsulfanyl-2,3-dioxopentyl phosphate + H2O. It participates in amino-acid biosynthesis; L-methionine biosynthesis via salvage pathway; L-methionine from S-methyl-5-thio-alpha-D-ribose 1-phosphate: step 2/6. In terms of biological role, catalyzes the dehydration of methylthioribulose-1-phosphate (MTRu-1-P) into 2,3-diketo-5-methylthiopentyl-1-phosphate (DK-MTP-1-P). This chain is Methylthioribulose-1-phosphate dehydratase, found in Candida dubliniensis (strain CD36 / ATCC MYA-646 / CBS 7987 / NCPF 3949 / NRRL Y-17841) (Yeast).